Reading from the N-terminus, the 95-residue chain is AESCDPYQACVLLSAEGRRVPLCSCAGRDCPNTDSHKIQSMYFCEDVSVVYACPDTDRVAIQIINGVGNIDFKLFCRCHTYEAHRSYFSCAELIG.

Post-translationally, contains 5 disulfide bonds. Expressed by the venom duct.

Its subcellular location is the secreted. In terms of biological role, acts as a neurotoxin by inhibiting an ion channel. The polypeptide is Turripeptide OL184 (Iotyrris olangoensis (Sea snail)).